A 267-amino-acid chain; its full sequence is Glutamate racemase (267 aa).

Substrate contacts are provided by residues 10–11 (DS) and 42–43 (YG). The active-site Proton donor/acceptor is C73. 74-75 (NT) is a substrate binding site. C183 serves as the catalytic Proton donor/acceptor. Position 184 to 185 (184 to 185 (TH)) interacts with substrate.

Belongs to the aspartate/glutamate racemases family.

The enzyme catalyses L-glutamate = D-glutamate. Its pathway is cell wall biogenesis; peptidoglycan biosynthesis. Functionally, provides the (R)-glutamate required for cell wall biosynthesis. This chain is Glutamate racemase, found in Lactobacillus acidophilus (strain ATCC 700396 / NCK56 / N2 / NCFM).